Reading from the N-terminus, the 103-residue chain is Large ribosomal subunit protein bL21 (103 aa).

The protein belongs to the bacterial ribosomal protein bL21 family. In terms of assembly, part of the 50S ribosomal subunit. Contacts protein L20.

Functionally, this protein binds to 23S rRNA in the presence of protein L20. This chain is Large ribosomal subunit protein bL21, found in Yersinia pseudotuberculosis serotype O:1b (strain IP 31758).